The sequence spans 69 residues: MEPLSIDKPFMYFDEINNELEYDPDSANEKHKKFPYQGQLKLLLCELFFLSKLQRHGILDGSTIVYIGS.

Tyr-22 is a binding site for mRNA. S-adenosyl-L-methionine contacts are provided by Gln-39, Tyr-66, and Gly-68.

The protein belongs to the class I-like SAM-binding methyltransferase superfamily. Poxvirus/kinetoplastid 2'-O-MTase family. As to quaternary structure, interacts with poly(A) polymerase catalytic subunit OPG063. Interacts with OPG109 and OPG123; these interactions might help linking transcription to capping and polyadenylation.

The protein resides in the virion. The catalysed reaction is a 5'-end (N(7)-methyl 5'-triphosphoguanosine)-ribonucleoside in mRNA + S-adenosyl-L-methionine = a 5'-end (N(7)-methyl 5'-triphosphoguanosine)-(2'-O-methyl-ribonucleoside) in mRNA + S-adenosyl-L-homocysteine + H(+). Functionally, displays methyltransferase, positive regulation of the poly(A) polymerase and transcription elongation activities. Involved in the modification of both mRNA ends and in intermediate and late gene positive transcription elongation. At the mRNAs 5' end, methylates the ribose 2' OH group of the first transcribed nucleotide, thereby producing a 2'-O-methylpurine cap. At the 3' end, functions as a processivity factor which stimulates the activity of the viral poly(A) polymerase OPG063 that creates mRNA's poly(A) tail. In the presence of OPG102, OPG063 does not dissociate from the RNA allowing tail elongation to around 250 adenylates. The polypeptide is Cap-specific mRNA (nucleoside-2'-O-)-methyltransferase (OPG102) (Sus scrofa (Pig)).